Consider the following 377-residue polypeptide: Hsc70-interacting protein 2 (377 aa).

The segment at A68–V123 is disordered. A Phosphoserine modification is found at S80. Over residues P89–S105 the composition is skewed to acidic residues. 3 TPR repeats span residues A126–N159, L161–L193, and A195–E227. Residues N239–H276 adopt a coiled-coil conformation. Over residues I243–N277 the composition is skewed to basic and acidic residues. Disordered stretches follow at residues I243–G302 and D344–D377. Positions G282 to G293 are enriched in gly residues. One can recognise an STI1 domain in the interval N294–I336. Positions K355 to A369 are enriched in basic and acidic residues.

The protein belongs to the FAM10 family. Homotetramer. Interacts with Hsc70 as well as DNAJ homologs and Hsp90.

It localises to the cytoplasm. In terms of biological role, one HIP oligomer binds the ATPase domains of at least two Hsc70 molecules dependent on activation of the Hsc70 ATPase by Hsp40. Stabilizes the ADP state of Hsc70 that has a high affinity for substrate protein. Through its own chaperone activity, it may contribute to the interaction of Hsc70 with various target proteins. The chain is Hsc70-interacting protein 2 from Drosophila melanogaster (Fruit fly).